The following is a 60-amino-acid chain: Transcriptional regulatory protein SenN (60 aa).

Residues 11-31 (RFRKRKTFGNQILPLELLIEK) constitute a DNA-binding region (H-T-H motif).

It to B.subtilis SenS.

Its function is as follows. Regulates the expression of extracellular-protein genes of Bacillus natto. The protein is Transcriptional regulatory protein SenN (senN) of Bacillus subtilis subsp. natto.